The sequence spans 353 residues: 11-beta-hydroxysteroid dehydrogenase B (353 aa).

The helical; Signal-anchor for type II membrane protein transmembrane segment at Leu-10–Pro-30 threads the bilayer. Positions Pro-13 to Ala-26 match the Proline-knob motif. NADP(+)-binding positions include Gly-54–Arg-80 and Asp-105. Residue Ser-184 participates in substrate binding. Residue Tyr-197 is the Proton acceptor of the active site. NADP(+) contacts are provided by residues Tyr-197–Lys-201 and Lys-201.

It belongs to the short-chain dehydrogenases/reductases (SDR) family. Expressed in seeds (at protein level).

It localises to the lipid droplet. The protein resides in the membrane. The catalysed reaction is an 11beta-hydroxysteroid + NADP(+) = an 11-oxosteroid + NADPH + H(+). Functionally, has dehydrogenase activity against 11 beta-hydroxysteroid and 17 beta-hydroxysteroid. May be involved in signal transduction regulated by various sterols. In Arachis hypogaea (Peanut), this protein is 11-beta-hydroxysteroid dehydrogenase B.